The chain runs to 419 residues: Arginine biosynthesis bifunctional protein ArgJ 1, mitochondrial (419 aa).

K177, T188, E275, N414, and T419 together coordinate substrate. Residue T188 is the Nucleophile of the active site.

The protein belongs to the ArgJ family. As to quaternary structure, heterodimer of an alpha and a beta chain. The alpha and beta chains are autoproteolytically processed from a single precursor protein within the mitochondrion.

It is found in the mitochondrion matrix. The catalysed reaction is N(2)-acetyl-L-ornithine + L-glutamate = N-acetyl-L-glutamate + L-ornithine. The enzyme catalyses L-glutamate + acetyl-CoA = N-acetyl-L-glutamate + CoA + H(+). Its pathway is amino-acid biosynthesis; L-arginine biosynthesis; L-ornithine and N-acetyl-L-glutamate from L-glutamate and N(2)-acetyl-L-ornithine (cyclic): step 1/1. It participates in amino-acid biosynthesis; L-arginine biosynthesis; N(2)-acetyl-L-ornithine from L-glutamate: step 1/4. Its function is as follows. Catalyzes two activities which are involved in the cyclic version of arginine biosynthesis: the synthesis of acetylglutamate from glutamate and acetyl-CoA, and of ornithine by transacetylation between acetylornithine and glutamate. In Sclerotinia sclerotiorum (strain ATCC 18683 / 1980 / Ss-1) (White mold), this protein is Arginine biosynthesis bifunctional protein ArgJ 1, mitochondrial.